We begin with the raw amino-acid sequence, 174 residues long: Mitochondrial holo-[acyl-carrier-protein] synthase (174 aa).

Belongs to the P-Pant transferase superfamily. AcpS family.

It is found in the mitochondrion. The enzyme catalyses apo-[ACP] + CoA = holo-[ACP] + adenosine 3',5'-bisphosphate + H(+). Its function is as follows. Transfers the 4'-phosphopantetheine moiety from coenzyme A to a Ser of mitochondrial acyl-carrier-protein. The chain is Mitochondrial holo-[acyl-carrier-protein] synthase (PPT2) from Eremothecium gossypii (strain ATCC 10895 / CBS 109.51 / FGSC 9923 / NRRL Y-1056) (Yeast).